The chain runs to 244 residues: MLYRDEAIVLRTHKLGEADRIVTLLTRQRGRVRAVAKGVRRTTSRFGSRLEPFTHVDLQLAEGRNLDTITQAETLTPFSKGLGLDYDRYTAGTVMLETADRLVAEEREPSVQQFLLLVGGLRAMVAGEHAPGQVLDSYLLRSLAVAGYAPSFEHCARCGTLSAEGAHRWFNPSMGGMLCSTCRVPGSASPAPETVALLGALLAGDWAVVDPAAARNLKEASTLVAAYLAWHLERGLKSMAYVER.

The protein belongs to the RecO family.

Involved in DNA repair and RecF pathway recombination. This chain is DNA repair protein RecO, found in Nocardioides sp. (strain ATCC BAA-499 / JS614).